The sequence spans 258 residues: Acetylglutamate kinase (258 aa).

Residues 41–42 (GG), Arg63, and Asn156 each bind substrate.

Belongs to the acetylglutamate kinase family. ArgB subfamily.

Its subcellular location is the cytoplasm. The enzyme catalyses N-acetyl-L-glutamate + ATP = N-acetyl-L-glutamyl 5-phosphate + ADP. It participates in amino-acid biosynthesis; L-arginine biosynthesis; N(2)-acetyl-L-ornithine from L-glutamate: step 2/4. Catalyzes the ATP-dependent phosphorylation of N-acetyl-L-glutamate. The polypeptide is Acetylglutamate kinase (Bacillus amyloliquefaciens (Bacillus velezensis)).